We begin with the raw amino-acid sequence, 140 residues long: 3-hydroxyacyl-[acyl-carrier-protein] dehydratase FabZ (140 aa).

H47 is an active-site residue.

The protein belongs to the thioester dehydratase family. FabZ subfamily.

The protein localises to the cytoplasm. It carries out the reaction a (3R)-hydroxyacyl-[ACP] = a (2E)-enoyl-[ACP] + H2O. Functionally, involved in unsaturated fatty acids biosynthesis. Catalyzes the dehydration of short chain beta-hydroxyacyl-ACPs and long chain saturated and unsaturated beta-hydroxyacyl-ACPs. This Streptococcus equi subsp. equi (strain 4047) protein is 3-hydroxyacyl-[acyl-carrier-protein] dehydratase FabZ.